A 393-amino-acid chain; its full sequence is UPF0496 protein At2g18630 (393 aa).

A disordered region spans residues 1-20 (MMGGKSSKSKKNVEFGSPST). A coiled-coil region spans residues 149–222 (VNQFEEENED…RLRNIKTWRR (74 aa)). 2 consecutive transmembrane segments (helical) span residues 226-246 (MVFV…AAVA) and 249-269 (PVVA…GKWC). Residues 299-356 (KEMDNISILVRKVEVEIESLLKKAEFAITEEKEVRLAIDEIKKKLDVFTETIEELGEH) are a coiled coil.

The protein belongs to the UPF0496 family.

The protein resides in the membrane. The sequence is that of UPF0496 protein At2g18630 from Arabidopsis thaliana (Mouse-ear cress).